The primary structure comprises 246 residues: UDP-N-acetyl-D-mannosaminuronic acid transferase (246 aa).

This sequence belongs to the glycosyltransferase 26 family.

The catalysed reaction is UDP-N-acetyl-alpha-D-mannosaminouronate + N-acetyl-alpha-D-glucosaminyl-di-trans,octa-cis-undecaprenyl diphosphate = beta-D-ManNAcA-(1-&gt;4)-alpha-D-GlcNAc-di-trans,octa-cis-undecaprenyl diphosphate + UDP + H(+). Its pathway is bacterial outer membrane biogenesis; enterobacterial common antigen biosynthesis. Its function is as follows. Catalyzes the synthesis of Und-PP-GlcNAc-ManNAcA (Lipid II), the second lipid-linked intermediate involved in enterobacterial common antigen (ECA) synthesis. In Salmonella dublin (strain CT_02021853), this protein is UDP-N-acetyl-D-mannosaminuronic acid transferase.